The chain runs to 160 residues: Large ribosomal subunit protein bL9 (160 aa).

Belongs to the bacterial ribosomal protein bL9 family.

Binds to the 23S rRNA. This Neorickettsia sennetsu (strain ATCC VR-367 / Miyayama) (Ehrlichia sennetsu) protein is Large ribosomal subunit protein bL9.